Here is a 597-residue protein sequence, read N- to C-terminus: Cysteine/serine-rich nuclear protein 3 (597 aa).

Disordered regions lie at residues 22 to 64 (EDVD…TPSS) and 348 to 407 (CQGD…GFVE). The span at 42-52 (SSESADSGDSV) shows a compositional bias: low complexity. Over residues 53-64 (NPSTSNHFTPSS) the composition is skewed to polar residues. Over residues 348-359 (CQGDEEEEEEDG) the composition is skewed to acidic residues. A compositionally biased stretch (polar residues) spans 361 to 376 (SFCSGATDSSTQSLAP). Residues 378 to 401 (ESDEEEEEEEEEEEEEEEDDDDDK) show a composition bias toward acidic residues.

Belongs to the AXUD1 family. In terms of tissue distribution, detected only in the brain of 15 dpc, 18 dpc, newborn and P6 mice (at protein level).

Its subcellular location is the nucleus. Its function is as follows. Binds to the consensus sequence 5'-AGAGTG-3' and has transcriptional activator activity. Plays a role in apoptosis. This Mus musculus (Mouse) protein is Cysteine/serine-rich nuclear protein 3 (Csrnp3).